The sequence spans 263 residues: Probable cyclic nucleotide phosphodiesterase CPS_4178 (263 aa).

Fe cation-binding residues include D21, H23, D62, N94, H160, H198, and H200. Residues H23, D62, and N94–H95 each bind AMP. H200 contributes to the AMP binding site.

This sequence belongs to the cyclic nucleotide phosphodiesterase class-III family. It depends on Fe(2+) as a cofactor.

This chain is Probable cyclic nucleotide phosphodiesterase CPS_4178, found in Colwellia psychrerythraea (strain 34H / ATCC BAA-681) (Vibrio psychroerythus).